A 400-amino-acid chain; its full sequence is F-box/kelch-repeat protein At4g19870 (400 aa).

Positions 1-10 are enriched in basic and acidic residues; sequence MKRQAKPPEK. The segment at 1 to 33 is disordered; that stretch reads MKRQAKPPEKKTKRTTNASSPTPSSSSPSLSSL. The segment covering 19 to 33 has biased composition (low complexity); the sequence is SSPTPSSSSPSLSSL. Positions 27–73 constitute an F-box domain; it reads SPSLSSLPDEIVENCLARISRSYYPTLSIVSKSFRSIISSTELYVAR. Kelch repeat units follow at residues 146–192, 194–240, and 242–284; these read EIYV…LYDG, IYVI…RIAE, and EGKI…SVLY.

The sequence is that of F-box/kelch-repeat protein At4g19870 from Arabidopsis thaliana (Mouse-ear cress).